Here is a 1593-residue protein sequence, read N- to C-terminus: DNA-directed RNA polymerase subunit beta' (1593 aa).

Residues Cys-74, Cys-76, Cys-89, and Cys-92 each coordinate Zn(2+). Asp-648, Asp-650, and Asp-652 together coordinate Mg(2+). 4 residues coordinate Zn(2+): Cys-1026, Cys-1100, Cys-1107, and Cys-1110.

This sequence belongs to the RNA polymerase beta' chain family. As to quaternary structure, the RNAP catalytic core consists of 2 alpha, 1 beta, 1 beta' and 1 omega subunit. When a sigma factor is associated with the core the holoenzyme is formed, which can initiate transcription. Mg(2+) is required as a cofactor. Requires Zn(2+) as cofactor.

The catalysed reaction is RNA(n) + a ribonucleoside 5'-triphosphate = RNA(n+1) + diphosphate. In terms of biological role, DNA-dependent RNA polymerase catalyzes the transcription of DNA into RNA using the four ribonucleoside triphosphates as substrates. This chain is DNA-directed RNA polymerase subunit beta', found in Endomicrobium trichonymphae.